A 104-amino-acid polypeptide reads, in one-letter code: Large ribosomal subunit protein uL23 (104 aa).

Belongs to the universal ribosomal protein uL23 family. As to quaternary structure, part of the 50S ribosomal subunit. Contacts protein L29, and trigger factor when it is bound to the ribosome.

Functionally, one of the early assembly proteins it binds 23S rRNA. One of the proteins that surrounds the polypeptide exit tunnel on the outside of the ribosome. Forms the main docking site for trigger factor binding to the ribosome. This Nostoc sp. (strain PCC 7120 / SAG 25.82 / UTEX 2576) protein is Large ribosomal subunit protein uL23.